The primary structure comprises 129 residues: D-ribose pyranase 1 (129 aa).

Catalysis depends on His20, which acts as the Proton donor. Substrate-binding positions include Asp28, His96, and 118 to 120 (YSN).

The protein belongs to the RbsD / FucU family. RbsD subfamily. In terms of assembly, homodecamer.

It is found in the cytoplasm. It carries out the reaction beta-D-ribopyranose = beta-D-ribofuranose. It functions in the pathway carbohydrate metabolism; D-ribose degradation; D-ribose 5-phosphate from beta-D-ribopyranose: step 1/2. In terms of biological role, catalyzes the interconversion of beta-pyran and beta-furan forms of D-ribose. The chain is D-ribose pyranase 1 from Rubrobacter xylanophilus (strain DSM 9941 / JCM 11954 / NBRC 16129 / PRD-1).